Here is a 442-residue protein sequence, read N- to C-terminus: Ankyrin repeat and MYND domain-containing protein 2 (442 aa).

ANK repeat units lie at residues 45–74 (NGMTPLMHAAYKGKLDMCKLLLRHGADVNC), 79–108 (HGYTALMFAALSGNKDITWVMLEAGAETDV), and 159–188 (KLAGPLHKIITTTNLHPVKIVMLINENPLL). Zn(2+) is bound by residues Cys320, Cys323, Cys332, Cys335, Cys341, Cys345, His353, and Cys357. The MYND-type zinc finger occupies 320-357 (CTTCGEKGASKRCSVCKMVIYCDQTCQKTHWFAHKKIC). Over residues 401-421 (TRICQKNDNPKDSEEGEKESL) the composition is skewed to basic and acidic residues. Residues 401 to 442 (TRICQKNDNPKDSEEGEKESLQSDAGLEGLQEAAVGPQVSEE) are disordered.

In terms of assembly, interacts with the retinal-specific guanylyl cyclase GC1.

It localises to the cell projection. Its subcellular location is the cilium. Functionally, may be involved in the trafficking of signaling proteins to the cilia. This chain is Ankyrin repeat and MYND domain-containing protein 2 (ANKMY2), found in Bos taurus (Bovine).